Here is a 375-residue protein sequence, read N- to C-terminus: Methylthioribose-1-phosphate isomerase (375 aa).

Substrate is bound by residues 53-55 (RGA), Arg-90, and Gln-202. The Proton donor role is filled by Asp-243. Position 253-254 (253-254 (NK)) interacts with substrate.

Belongs to the eIF-2B alpha/beta/delta subunits family. MtnA subfamily.

The catalysed reaction is 5-(methylsulfanyl)-alpha-D-ribose 1-phosphate = 5-(methylsulfanyl)-D-ribulose 1-phosphate. It participates in amino-acid biosynthesis; L-methionine biosynthesis via salvage pathway; L-methionine from S-methyl-5-thio-alpha-D-ribose 1-phosphate: step 1/6. Functionally, catalyzes the interconversion of methylthioribose-1-phosphate (MTR-1-P) into methylthioribulose-1-phosphate (MTRu-1-P). The polypeptide is Methylthioribose-1-phosphate isomerase (Rhodospirillum centenum (strain ATCC 51521 / SW)).